A 220-amino-acid polypeptide reads, in one-letter code: Inner membrane-spanning protein YciB (220 aa).

The next 6 membrane-spanning stretches (helical) occupy residues 20 to 40, 57 to 77, 86 to 106, 123 to 143, 156 to 176, and 187 to 207; these read EVPP…FFFA, IGAP…IALA, LPIM…LTLW, LFGA…GYVF, KLTL…EVVW, and FKVW…MPLI.

This sequence belongs to the YciB family.

The protein resides in the cell inner membrane. In terms of biological role, plays a role in cell envelope biogenesis, maintenance of cell envelope integrity and membrane homeostasis. This is Inner membrane-spanning protein YciB from Brucella anthropi (strain ATCC 49188 / DSM 6882 / CCUG 24695 / JCM 21032 / LMG 3331 / NBRC 15819 / NCTC 12168 / Alc 37) (Ochrobactrum anthropi).